Consider the following 207-residue polypeptide: Dephospho-CoA kinase (207 aa).

In terms of domain architecture, DPCK spans arginine 11–leucine 207. Residue alanine 19–serine 24 participates in ATP binding.

This sequence belongs to the CoaE family.

It is found in the cytoplasm. It catalyses the reaction 3'-dephospho-CoA + ATP = ADP + CoA + H(+). It functions in the pathway cofactor biosynthesis; coenzyme A biosynthesis; CoA from (R)-pantothenate: step 5/5. In terms of biological role, catalyzes the phosphorylation of the 3'-hydroxyl group of dephosphocoenzyme A to form coenzyme A. The protein is Dephospho-CoA kinase of Synechococcus sp. (strain CC9605).